The sequence spans 85 residues: UPF0386 protein HNE_3437 (85 aa).

It belongs to the UPF0386 family.

The chain is UPF0386 protein HNE_3437 from Hyphomonas neptunium (strain ATCC 15444).